A 339-amino-acid chain; its full sequence is UDP-N-acetylglucosamine--N-acetylmuramyl-(pentapeptide) pyrophosphoryl-undecaprenol N-acetylglucosamine transferase (339 aa).

UDP-N-acetyl-alpha-D-glucosamine is bound by residues 9–11 (TGG), asparagine 119, arginine 160, serine 188, and glutamine 280.

The protein belongs to the glycosyltransferase 28 family. MurG subfamily.

The protein resides in the cell inner membrane. It carries out the reaction di-trans,octa-cis-undecaprenyl diphospho-N-acetyl-alpha-D-muramoyl-L-alanyl-D-glutamyl-meso-2,6-diaminopimeloyl-D-alanyl-D-alanine + UDP-N-acetyl-alpha-D-glucosamine = di-trans,octa-cis-undecaprenyl diphospho-[N-acetyl-alpha-D-glucosaminyl-(1-&gt;4)]-N-acetyl-alpha-D-muramoyl-L-alanyl-D-glutamyl-meso-2,6-diaminopimeloyl-D-alanyl-D-alanine + UDP + H(+). It functions in the pathway cell wall biogenesis; peptidoglycan biosynthesis. Cell wall formation. Catalyzes the transfer of a GlcNAc subunit on undecaprenyl-pyrophosphoryl-MurNAc-pentapeptide (lipid intermediate I) to form undecaprenyl-pyrophosphoryl-MurNAc-(pentapeptide)GlcNAc (lipid intermediate II). This is UDP-N-acetylglucosamine--N-acetylmuramyl-(pentapeptide) pyrophosphoryl-undecaprenol N-acetylglucosamine transferase from Thermus thermophilus (strain ATCC BAA-163 / DSM 7039 / HB27).